The chain runs to 64 residues: Large ribosomal subunit protein bL35 (64 aa).

Belongs to the bacterial ribosomal protein bL35 family.

The protein is Large ribosomal subunit protein bL35 of Desulforamulus reducens (strain ATCC BAA-1160 / DSM 100696 / MI-1) (Desulfotomaculum reducens).